Reading from the N-terminus, the 332-residue chain is Beta-1,3-N-acetylglucosaminyltransferase radical fringe (332 aa).

The Cytoplasmic segment spans residues 1–6 (MSRARR). The chain crosses the membrane as a helical; Signal-anchor for type II membrane protein span at residues 7–29 (VLCRACLALAAVLAVLLLLPLPL). The Lumenal segment spans residues 30–332 (PLPLPRAPAP…MKNRVEGAFQ (303 aa)). Position 75 (arginine 75) interacts with substrate. Asparagine 114 carries N-linked (GlcNAc...) asparagine glycosylation. Disulfide bonds link cysteine 115–cysteine 126 and cysteine 144–cysteine 208. A substrate-binding site is contributed by aspartate 148. Aspartate 149 lines the Mn(2+) pocket. The active site involves aspartate 238. Histidine 262 provides a ligand contact to Mn(2+). A disulfide bridge links cysteine 312 with cysteine 321.

The protein belongs to the glycosyltransferase 31 family. Mn(2+) is required as a cofactor. In terms of tissue distribution, detected in all the examined tissues (12.5 dpc). High expression found in adult brain.

Its subcellular location is the golgi apparatus membrane. It carries out the reaction 3-O-(alpha-L-fucosyl)-L-threonyl-[EGF-like domain protein] + UDP-N-acetyl-alpha-D-glucosamine = 3-O-(N-acetyl-beta-D-glucosaminyl-(1-&gt;3)-alpha-L-fucosyl)-L-threonyl-[EGF-like domain protein] + UDP + H(+). The catalysed reaction is 3-O-(alpha-L-fucosyl)-L-seryl-[EGF-like domain protein] + UDP-N-acetyl-alpha-D-glucosamine = 3-O-(N-acetyl-beta-D-glucosaminyl-(1-&gt;3)-alpha-L-fucosyl)-L-seryl-[EGF-like domain protein] + UDP + H(+). Functionally, glycosyltransferase that initiates the elongation of O-linked fucose residues attached to EGF-like repeats in the extracellular domain of Notch molecules. Modulates NOTCH1 activity by modifying O-fucose residues at specific EGF-like domains resulting in enhancement of NOTCH1 activation by DLL1 and JAG1. May be involved in limb formation and in neurogenesis. This chain is Beta-1,3-N-acetylglucosaminyltransferase radical fringe, found in Mus musculus (Mouse).